Consider the following 151-residue polypeptide: MIELLKKIFLVDLFQGLFVTFRNQNPKYIYTEQYPAERPKVAERYRGAPRLNINPDNGETLCISCNLCALACPENLIVVTSERSEVTKRKELVTFTYDTSRCMFCGLCEDACPVDALELTQDFEMASYTREGQIWDRQALEEGPRPTQYKC.

2 consecutive 4Fe-4S ferredoxin-type domains span residues 49–82 (PRLN…VTSE) and 93–122 (VTFT…LTQD). Positions 62, 65, 68, 72, 102, 105, 108, and 112 each coordinate [4Fe-4S] cluster.

The protein belongs to the complex I 23 kDa subunit family. In terms of assembly, NDH-1 is composed of 14 different subunits. Subunits NuoA, H, J, K, L, M, N constitute the membrane sector of the complex. The cofactor is [4Fe-4S] cluster.

It is found in the cell inner membrane. It carries out the reaction a quinone + NADH + 5 H(+)(in) = a quinol + NAD(+) + 4 H(+)(out). Functionally, NDH-1 shuttles electrons from NADH, via FMN and iron-sulfur (Fe-S) centers, to quinones in the respiratory chain. The immediate electron acceptor for the enzyme in this species is believed to be ubiquinone. Couples the redox reaction to proton translocation (for every two electrons transferred, four hydrogen ions are translocated across the cytoplasmic membrane), and thus conserves the redox energy in a proton gradient. The sequence is that of NADH-quinone oxidoreductase subunit I 2 from Solibacter usitatus (strain Ellin6076).